A 206-amino-acid polypeptide reads, in one-letter code: Large ribosomal subunit protein eL13z (206 aa).

A disordered region spans residues 185–206; it reads TNKRHAGARAKRAAEAEKEEKK. The span at 186 to 195 shows a compositional bias: basic residues; it reads NKRHAGARAK. Over residues 196-206 the composition is skewed to basic and acidic residues; sequence RAAEAEKEEKK.

It belongs to the eukaryotic ribosomal protein eL13 family.

It localises to the cytoplasm. The sequence is that of Large ribosomal subunit protein eL13z (RPL13B) from Arabidopsis thaliana (Mouse-ear cress).